We begin with the raw amino-acid sequence, 317 residues long: Sulfate adenylyltransferase subunit 2 (317 aa).

Disordered regions lie at residues 1 to 21 (MPDSRPDTELSNPQSAKAPLD) and 298 to 317 (RAIDRDQSGSMEKKKREGYF).

The protein belongs to the PAPS reductase family. CysD subfamily. In terms of assembly, heterodimer composed of CysD, the smaller subunit, and CysN.

The enzyme catalyses sulfate + ATP + H(+) = adenosine 5'-phosphosulfate + diphosphate. Its pathway is sulfur metabolism; hydrogen sulfide biosynthesis; sulfite from sulfate: step 1/3. With CysN forms the ATP sulfurylase (ATPS) that catalyzes the adenylation of sulfate producing adenosine 5'-phosphosulfate (APS) and diphosphate, the first enzymatic step in sulfur assimilation pathway. APS synthesis involves the formation of a high-energy phosphoric-sulfuric acid anhydride bond driven by GTP hydrolysis by CysN coupled to ATP hydrolysis by CysD. The chain is Sulfate adenylyltransferase subunit 2 from Rhizobium etli (strain CIAT 652).